Consider the following 1106-residue polypeptide: Putative pre-mRNA-splicing factor ATP-dependent RNA helicase DHX16 (1106 aa).

Disordered stretches follow at residues 73-100, 120-286, and 366-394; these read KIQN…DKEK, DDIV…TKSR, and YIND…WEQN. Positions 78–94 are enriched in low complexity; the sequence is TSSSSSSSSTSLSSSSS. Residues 138–155 show a composition bias toward basic residues; it reads KRKKKEKKKEKKDKKDKK. The span at 156–167 shows a compositional bias: basic and acidic residues; sequence DKKSSTRKKSDN. Positions 189–201 are enriched in low complexity; the sequence is NNENNDNNNDNNN. Basic and acidic residues predominate over residues 232–283; that stretch reads REQREVKELSDRIKKRDEKSTKKKIVDDSETKESIERKNRLEQNEQLETERT. The region spanning 477–640 is the Helicase ATP-binding domain; sequence IDAVREYQVL…FDGAPTFNIP (164 aa). Residue 490 to 497 coordinates ATP; it reads GETGSGKT. Residues 587–590 carry the DEAH box motif; it reads DEAH. Positions 665–838 constitute a Helicase C-terminal domain; sequence TVLQIHITEP…NVVLLLKSMG (174 aa).

It belongs to the DEAD box helicase family. DEAH subfamily. DDX16/PRP8 sub-subfamily. Component of pre-catalytic spliceosome complexes.

Its subcellular location is the nucleus. It is found in the nucleoplasm. It carries out the reaction ATP + H2O = ADP + phosphate + H(+). Its function is as follows. Required for pre-mRNA splicing as component of the spliceosome. Contributes to pre-mRNA splicing after spliceosome formation and prior to the first transesterification reaction. In Dictyostelium discoideum (Social amoeba), this protein is Putative pre-mRNA-splicing factor ATP-dependent RNA helicase DHX16 (dhx16).